A 417-amino-acid polypeptide reads, in one-letter code: NADH-quinone oxidoreductase subunit D (417 aa).

This sequence belongs to the complex I 49 kDa subunit family. In terms of assembly, NDH-1 is composed of 14 different subunits. Subunits NuoB, C, D, E, F, and G constitute the peripheral sector of the complex.

It is found in the cell inner membrane. It carries out the reaction a quinone + NADH + 5 H(+)(in) = a quinol + NAD(+) + 4 H(+)(out). Functionally, NDH-1 shuttles electrons from NADH, via FMN and iron-sulfur (Fe-S) centers, to quinones in the respiratory chain. The immediate electron acceptor for the enzyme in this species is believed to be ubiquinone. Couples the redox reaction to proton translocation (for every two electrons transferred, four hydrogen ions are translocated across the cytoplasmic membrane), and thus conserves the redox energy in a proton gradient. This is NADH-quinone oxidoreductase subunit D from Francisella philomiragia subsp. philomiragia (strain ATCC 25017 / CCUG 19701 / FSC 153 / O#319-036).